The primary structure comprises 282 residues: MKKRFLSICTMTIAALATTTMVNTSYAKTDTESHNHSSLGTENKNVLDINSSSHNIKPSQNKSYPSVILPNNNRHQIFNTTQGHYDAVSFIYIPIHGGYMSGSGVVVGENEILTNKHVVNGAKGNPRNISVHPSAKNENDYPNGKFVGQEIIPYPGNSDLAILRVSPNEHNQHIGQVVKPATISSNTDTRINENITVTGYPGDKPLATMWESVGKVVYIGGEELRYDLSTVGGNSGSPVFNGKNQVIGIHYGGVDNKYNSSVYINDFVQQFLRNNIPDINIQ.

The signal sequence occupies residues 1–27; it reads MKKRFLSICTMTIAALATTTMVNTSYA. A propeptide spanning residues 28–66 is cleaved from the precursor; that stretch reads KTDTESHNHSSLGTENKNVLDINSSSHNIKPSQNKSYPS. Active-site charge relay system residues include His-117, Asp-159, and Ser-235.

The protein belongs to the peptidase S1B family.

Its subcellular location is the secreted. The enzyme catalyses Preferential cleavage: Glu-|-Xaa, Asp-|-Xaa.. In terms of biological role, exhibits a significant hydrolytic activity for the carbonyl side of glutamic acid. Shows activity toward human fibronectin and type 1 collagen. The polypeptide is Glutamyl endopeptidase (gseA) (Staphylococcus epidermidis (strain ATCC 35984 / DSM 28319 / BCRC 17069 / CCUG 31568 / BM 3577 / RP62A)).